Reading from the N-terminus, the 318-residue chain is tRNA dimethylallyltransferase (318 aa).

21-28 contacts ATP; the sequence is GPTATGKS. Position 23-28 (23-28) interacts with substrate; it reads TATGKS. The tract at residues 46–49 is interaction with substrate tRNA; sequence DSMQ.

This sequence belongs to the IPP transferase family. Monomer. Mg(2+) is required as a cofactor.

It carries out the reaction adenosine(37) in tRNA + dimethylallyl diphosphate = N(6)-dimethylallyladenosine(37) in tRNA + diphosphate. In terms of biological role, catalyzes the transfer of a dimethylallyl group onto the adenine at position 37 in tRNAs that read codons beginning with uridine, leading to the formation of N6-(dimethylallyl)adenosine (i(6)A). The sequence is that of tRNA dimethylallyltransferase from Acidothermus cellulolyticus (strain ATCC 43068 / DSM 8971 / 11B).